The primary structure comprises 1063 residues: Error-prone DNA polymerase (1063 aa).

It belongs to the DNA polymerase type-C family. DnaE2 subfamily.

It localises to the cytoplasm. It carries out the reaction DNA(n) + a 2'-deoxyribonucleoside 5'-triphosphate = DNA(n+1) + diphosphate. In terms of biological role, DNA polymerase involved in damage-induced mutagenesis and translesion synthesis (TLS). It is not the major replicative DNA polymerase. The polypeptide is Error-prone DNA polymerase (Burkholderia mallei (strain ATCC 23344)).